Here is a 594-residue protein sequence, read N- to C-terminus: APOBEC1 complementation factor (594 aa).

3 consecutive RRM domains span residues 56–134 (CEIF…ASVD), 136–218 (CRLF…WAEP), and 231–303 (KILY…LAKP). The interval 359–408 (HFPATKGHLSNRALIRTPSVREIYMNVPVGAAGVRGLGGRGYLAYTGLGR) is required for nuclear localization. Residue threonine 498 is modified to Phosphothreonine.

As to quaternary structure, part of the apolipoprotein B mRNA editing complex with APOBEC1. Interacts with TNPO2; TNPO2 may be responsible for transport of A1CF into the nucleus. Interacts with SYNCRIP. Interacts with CELF2/CUGBP2. Interacts with RBM47. Isoforms 1 and 2 are widely expressed while isoforms 3 and 4 are restricted to liver and small intestine.

It localises to the nucleus. It is found in the endoplasmic reticulum. The protein resides in the cytoplasm. Functionally, essential component of the apolipoprotein B mRNA editing enzyme complex which is responsible for the postranscriptional editing of a CAA codon for Gln to a UAA codon for stop in APOB mRNA. Binds to APOB mRNA and is probably responsible for docking the catalytic subunit, APOBEC1, to the mRNA to allow it to deaminate its target cytosine. The complex also seems to protect the edited APOB mRNA from nonsense-mediated decay. The polypeptide is APOBEC1 complementation factor (A1cf) (Rattus norvegicus (Rat)).